The primary structure comprises 67 residues: Preprofallaxidin-1 (67 aa).

Positions 1 to 22 (MASLKKSLFLVLFLGMVSLSIC) are cleaved as a signal peptide. The propeptide occupies 23–46 (DKEKREGENEEEEEEHEEESEEKR). The interval 24 to 46 (KEKREGENEEEEEEHEEESEEKR) is disordered. The span at 30-42 (ENEEEEEEHEEES) shows a compositional bias: acidic residues.

Expressed by the skin glands.

The protein resides in the secreted. Functionally, fallaxidin-4.1 shows antibacterial activity against the Gram-positive bacteria L.lactis (MIC=12 uM), M.luteus (MIC=100 uM), S.epidermidis (MIC=100 uM) and S.uberis (MIC=50 uM). No antibacterial activity against the Gram-positive bacteria B.cereus, E.faecalis, L.innocua, S.aureus, or the Gram-negative bacteria E.cloacae and E.coli. Inhibits the formation of NO by neuronal nitric oxide synthase with an IC(50) of 13.3 uM. The sequence is that of Preprofallaxidin-1 from Litoria fallax (Eastern dwarf tree frog).